The chain runs to 317 residues: Methionyl-tRNA formyltransferase (317 aa).

117-120 (SLLP) serves as a coordination point for (6S)-5,6,7,8-tetrahydrofolate.

It belongs to the Fmt family.

It catalyses the reaction L-methionyl-tRNA(fMet) + (6R)-10-formyltetrahydrofolate = N-formyl-L-methionyl-tRNA(fMet) + (6S)-5,6,7,8-tetrahydrofolate + H(+). Attaches a formyl group to the free amino group of methionyl-tRNA(fMet). The formyl group appears to play a dual role in the initiator identity of N-formylmethionyl-tRNA by promoting its recognition by IF2 and preventing the misappropriation of this tRNA by the elongation apparatus. In Herminiimonas arsenicoxydans, this protein is Methionyl-tRNA formyltransferase.